The sequence spans 280 residues: Probable holocytochrome-c-type synthase (280 aa).

The segment at 1–95 (MGSSQSTPKV…FALPTKREKS (95 aa)) is disordered. HRM repeat units lie at residues 35–40 (QCPLTP) and 56–61 (ACPVGA).

It belongs to the cytochrome c-type heme lyase family.

Its subcellular location is the mitochondrion inner membrane. It catalyses the reaction holo-[cytochrome c] = apo-[cytochrome c] + heme b. Its function is as follows. Probable lyase that catalyzes the covalent linking of the heme group to the cytochrome C apoprotein to produce the mature functional cytochrome. The polypeptide is Probable holocytochrome-c-type synthase (cchl-1) (Caenorhabditis elegans).